A 416-amino-acid polypeptide reads, in one-letter code: Histidine--tRNA ligase (416 aa).

The protein belongs to the class-II aminoacyl-tRNA synthetase family.

It is found in the cytoplasm. It catalyses the reaction tRNA(His) + L-histidine + ATP = L-histidyl-tRNA(His) + AMP + diphosphate + H(+). The sequence is that of Histidine--tRNA ligase (hisS) from Methanocaldococcus jannaschii (strain ATCC 43067 / DSM 2661 / JAL-1 / JCM 10045 / NBRC 100440) (Methanococcus jannaschii).